A 219-amino-acid chain; its full sequence is GPI-anchored hemophore PGA7 (219 aa).

The first 13 residues, 1–13 (MHFIFYLILLVSA), serve as a signal peptide directing secretion. The CFEM domain occupies 17-126 (GNFGTYPKVP…SMLSTAAGDA (110 aa)). Intrachain disulfides connect cysteine 45–cysteine 85, cysteine 49–cysteine 80, cysteine 59–cysteine 66, and cysteine 68–cysteine 101. Aspartate 63 contacts heme. Residues 151–194 (VVSETGSASETGSSESAQSTTTGSSSTGSSSTDSSSSSSSSPSS) are disordered. Low complexity predominate over residues 153-194 (SETGSASETGSSESAQSTTTGSSSTGSSSTDSSSSSSSSPSS). Serine 194 carries GPI-anchor amidated serine lipidation. Residues 195–219 (SANFAVLQTGGIGSVILGFMMYLLV) constitute a propeptide, removed in mature form.

The protein belongs to the RBT5 family. In terms of assembly, interacts with RBT5. The GPI-anchor is attached to the protein in the endoplasmic reticulum and serves to target the protein to the cell surface. There, the glucosamine-inositol phospholipid moiety is cleaved off and the GPI-modified mannoprotein is covalently attached via its lipidless GPI glycan remnant to the 1,6-beta-glucan of the outer cell wall layer.

It localises to the secreted. The protein resides in the cell wall. It is found in the cell membrane. In terms of biological role, GPI-linked hyphal surface heme-binding protein involved in heme-iron utilization. Heme transfer occurs between PGA7, RBT5 and CSA2 supporting a model in which the 3 CFEM proteins cooperate in a heme-acquisition system and form a cross-cell wall heme-transfer cascade. The ability to acquire iron from host tissues is a major virulence factor of pathogenic microorganisms. Required for biofilm formation. The chain is GPI-anchored hemophore PGA7 from Candida albicans (strain SC5314 / ATCC MYA-2876) (Yeast).